The chain runs to 90 residues: Acylphosphatase (90 aa).

Residues 3–90 (QKLFIVTGHV…EQFEHFEIRR (88 aa)) form the Acylphosphatase-like domain. Residues arginine 18 and asparagine 36 contribute to the active site.

Belongs to the acylphosphatase family.

It carries out the reaction an acyl phosphate + H2O = a carboxylate + phosphate + H(+). The polypeptide is Acylphosphatase (acyP) (Actinobacillus pleuropneumoniae serotype 5b (strain L20)).